The chain runs to 445 residues: RNA pseudouridine synthase 2, chloroplastic (445 aa).

The N-terminal 44 residues, 1-44 (MATTAAASPPAIATALSALLRRQRRRSSRCVGASHARCLAADAN), are a transit peptide targeting the chloroplast. A disordered region spans residues 47-66 (AVAPSRRGGHGGTRLEEAVP). One can recognise an S4 RNA-binding domain in the interval 72–147 (SRIDAWISAR…IPLDIVYEDD (76 aa)). Residue Asp-235 is part of the active site.

The protein belongs to the pseudouridine synthase RluA family.

It is found in the plastid. The protein resides in the chloroplast. It carries out the reaction a uridine in RNA = a pseudouridine in RNA. The protein is RNA pseudouridine synthase 2, chloroplastic of Oryza sativa subsp. japonica (Rice).